Consider the following 192-residue polypeptide: UPF0312 protein PputW619_0484 (192 aa).

Residues 1 to 23 (MLKKTFAALALGTALLSAGQAMA) form the signal peptide.

This sequence belongs to the UPF0312 family. Type 1 subfamily.

Its subcellular location is the periplasm. The sequence is that of UPF0312 protein PputW619_0484 from Pseudomonas putida (strain W619).